A 613-amino-acid chain; its full sequence is Na(+)/H(+) antiporter NhaA 1 (613 aa).

Positions 1–23 (MTEASARTIGPLPSRFSRDPKTP) are disordered. The tract at residues 1–408 (MTEASARTIG…DPARQDEARV (408 aa)) is na(+)/H(+) antiporter NhaA. The next 11 helical transmembrane spans lie at 29-49 (AAAALLLAFTVLAILWANSPW), 81-101 (GLMAFFFFIVGLEVKSEFVIG), 110-130 (AVPVVAAIAGLIVPAVIFLTF), 138-158 (QAWGVVISTDTAFLVGALAVI), 168-188 (IFLLTLAVVDDVGALGAIALF), 191-211 (DDLKLAPLAVAALLIAALAMV), 231-251 (IALYLAHVHPTLAGVAVAVLI), 300-320 (AVGPYVSFVVLPIFALANAGV), 337-357 (WGIVAGLVVGKFVGITAATAL), 377-397 (GGAALSGIGFTISLFIVDVAI), and 408-428 (VGVLIASVLAFTLSWALFRIT). Positions 409–613 (GVLIASVLAF…SLIRALEAGR (205 aa)) constitute a Thioredoxin domain.

It in the N-terminal section; belongs to the NhaA Na(+)/H(+) (TC 2.A.33) antiporter family.

Its subcellular location is the cell membrane. The enzyme catalyses Na(+)(in) + 2 H(+)(out) = Na(+)(out) + 2 H(+)(in). Functionally, na(+)/H(+) antiporter that extrudes sodium in exchange for external protons. This Mycobacterium sp. (strain KMS) protein is Na(+)/H(+) antiporter NhaA 1.